The sequence spans 289 residues: Aquaporin-2 (289 aa).

A disordered region spans residues 1–36 (MSNESNDLEKNISHLDPTGVDNAYIPPEQPETKHSR). The Cytoplasmic portion of the chain corresponds to 1–47 (MSNESNDLEKNISHLDPTGVDNAYIPPEQPETKHSRFNIDRDTLRNH). A helical membrane pass occupies residues 48–68 (FIAAVGEFCGTFMFLWCAYVI). Topologically, residues 69-90 (CNVANHDVALTTEPEGSHPGQL) are extracellular. The helical transmembrane segment at 91 to 111 (IMIALGFGFSVMFSIWCFAGV) threads the bilayer. Residues 112–135 (SGGALNPAVSLSLCLARAISPARC) are Cytoplasmic-facing. The NPA 1 motif lies at 117-119 (NPA). A helical transmembrane segment spans residues 136–156 (VVMWFPQIIAGMAAGGAASAM). Residues 157–175 (TPGKVLFTNALGLGCSRSR) lie on the Extracellular side of the membrane. Residues 176–196 (GLFLEMFGTAVLCLTVLMTAV) traverse the membrane as a helical segment. The Cytoplasmic segment spans residues 197 to 202 (EKRETN). A helical transmembrane segment spans residues 203 to 223 (FMAALPIGISLFMAHMALTGY). At 224 to 247 (TGTGVNPARSLGAAVAARYFPHYH) the chain is on the extracellular side. The short motif at 229-231 (NPA) is the NPA 2 element. A helical transmembrane segment spans residues 248 to 268 (WIYWIGPLLGAFLAWSVWQLL). The Cytoplasmic portion of the chain corresponds to 269–289 (QILDYTTYVNAEKAAGQKKED).

Belongs to the MIP/aquaporin (TC 1.A.8) family.

It is found in the endoplasmic reticulum membrane. The protein localises to the cell membrane. In terms of biological role, water channel required to facilitate the transport of water across membranes. Involved in freeze tolerance, osmotolerance and cell flocculation in liquid cultures. Is non-functional in most laboratory strains. The chain is Aquaporin-2 (AQY2) from Saccharomyces cerevisiae (Baker's yeast).